The following is an 803-amino-acid chain: Nuclear factor of activated T-cells, cytoplasmic 1 (803 aa).

Residues 101–106 form a calcineurin-binding region; the sequence is PRIEIT. The tract at residues 109–199 is transactivation domain A (TAD-A); the sequence is LGLHHNSSQF…CVSPKTTDPE (91 aa). The segment covering 181–195 has biased composition (polar residues); sequence PQTSPWQSPCVSPKT. Residues 181 to 279 form a disordered region; it reads PQTSPWQSPC…GSPRVSVTDD (99 aa). Tandem repeats lie at residues 184 to 200 and 214 to 230. The segment at 184–279 is 3 X SP repeats; that stretch reads SPWQSPCVSP…GSPRVSVTDD (96 aa). Phosphoserine occurs at positions 214 and 218. Over residues 214 to 231 the composition is skewed to low complexity; that stretch reads SPRHSPSTSPRTSVTEES. The residue at position 226 (Ser-226) is a Phosphoserine; by PKA. Residues 246-248 carry the Nuclear localization signal motif; it reads KRK. The stretch at 263–279 is repeat 3; that stretch reads SPTPSPQGSPRVSVTDD. Phosphoserine; by PKA is present on Ser-275. The Nuclear export signal signature appears at 291 to 302; that stretch reads SAIVAAINALST. The 183-residue stretch at 389-571 folds into the RHD domain; that stretch reads PSLPALDWQL…NPIECSQRSA (183 aa). A DNA-binding region spans residues 418 to 425; the sequence is RAHYETEG. Residues 661–663 carry the Nuclear localization signal motif; that stretch reads KRK. The tract at residues 723–803 is disordered; it reads LMPGFPPRPQ…QPQVSPTSSG (81 aa). The span at 778–792 shows a compositional bias: pro residues; the sequence is SGVPPGPPQPPPPTL. Low complexity predominate over residues 793–803; it reads LQPQVSPTSSG.

As to quaternary structure, member of the multicomponent NFATC transcription complex that consists of at least two components, a pre-existing cytoplasmic component NFATC2 and an inducible nuclear component NFATC1. Other members such as NFATC4, NFATC3 or members of the activating protein-1 family, MAF, GATA4 and Cbp/p300 can also bind the complex. NFATC proteins bind to DNA as monomers. Interacts with HOMER2 and HOMER3; this interaction may compete with calcineurin/PPP3CA-binding and hence prevent NFATC1 dephosphorylation and activation. Interacts with TLE6/GRG6. Phosphorylated by NFATC-kinase and GSK3B; phosphorylation induces NFATC1 nuclear exit and dephosphorylation by calcineurin promotes nuclear import. Phosphorylation by PKA and DYRK2 negatively modulates nuclear accumulation, and promotes subsequent phosphorylation by GSK3B or casein kinase 1.

The protein localises to the cytoplasm. It is found in the nucleus. Its function is as follows. Plays a role in the inducible expression of cytokine genes in T-cells, especially in the induction of the IL-2 or IL-4 gene transcription. Also controls gene expression in embryonic cardiac cells. Could regulate not only the activation and proliferation but also the differentiation and programmed death of T-lymphocytes as well as lymphoid and non-lymphoid cells. Required for osteoclastogenesis and regulates many genes important for osteoclast differentiation and function. The polypeptide is Nuclear factor of activated T-cells, cytoplasmic 1 (Bos taurus (Bovine)).